Reading from the N-terminus, the 456-residue chain is UDP-N-acetylmuramate--L-alanine ligase (456 aa).

Residue 112–118 (GTHGKTT) participates in ATP binding.

Belongs to the MurCDEF family.

It localises to the cytoplasm. The catalysed reaction is UDP-N-acetyl-alpha-D-muramate + L-alanine + ATP = UDP-N-acetyl-alpha-D-muramoyl-L-alanine + ADP + phosphate + H(+). It participates in cell wall biogenesis; peptidoglycan biosynthesis. Its function is as follows. Cell wall formation. The protein is UDP-N-acetylmuramate--L-alanine ligase of Trichlorobacter lovleyi (strain ATCC BAA-1151 / DSM 17278 / SZ) (Geobacter lovleyi).